The following is a 223-amino-acid chain: uncharacterized protein (223 aa).

This is an uncharacterized protein from Dryophytes versicolor (chameleon treefrog).